The following is a 61-amino-acid chain: Large ribosomal subunit protein eL24 (61 aa).

Zn(2+) is bound by residues Cys7, Cys10, Cys33, and Cys37. Residues Cys7 to Cys37 form a C4-type zinc finger.

The protein belongs to the eukaryotic ribosomal protein eL24 family. As to quaternary structure, part of the 50S ribosomal subunit. Forms a cluster with proteins L3 and L14. The cofactor is Zn(2+).

Binds to the 23S rRNA. The protein is Large ribosomal subunit protein eL24 of Metallosphaera sedula (strain ATCC 51363 / DSM 5348 / JCM 9185 / NBRC 15509 / TH2).